Here is a 199-residue protein sequence, read N- to C-terminus: Recombination protein RecR (199 aa).

The segment at 56–71 (CAVCGNIAEETQCRIC) adopts a C4-type zinc-finger fold. The region spanning 79–174 (TVICVVEEPK…KVTRLASGLP (96 aa)) is the Toprim domain.

The protein belongs to the RecR family.

In terms of biological role, may play a role in DNA repair. It seems to be involved in an RecBC-independent recombinational process of DNA repair. It may act with RecF and RecO. This Thermobifida fusca (strain YX) protein is Recombination protein RecR.